Consider the following 440-residue polypeptide: Glyceraldehyde-3-phosphate dehydrogenase, testis-specific (440 aa).

The segment at 1–105 is testis-specific N-terminal extension; sequence MSRRDVVLTN…PPPPPLQKPA (105 aa). 2 stretches are compositionally biased toward pro residues: residues 40 to 75 and 83 to 102; these read PPKL…PPQI and APPP…PPLQ. Positions 40-106 are disordered; it reads PPKLEDPPPT…PPPPLQKPAR (67 aa). Residues 117–118, D138, K183, Y205, and T225 each bind NAD(+); that span reads RI. D-glyceraldehyde 3-phosphate-binding positions include 255–257, T286, 315–316, and R338; these read SCT and TG. The active-site Nucleophile is C256. S358 is modified (phosphoserine). Position 420 (N420) interacts with NAD(+).

This sequence belongs to the glyceraldehyde-3-phosphate dehydrogenase family. As to quaternary structure, homotetramer. Testis specific.

The protein localises to the cytoplasm. It catalyses the reaction D-glyceraldehyde 3-phosphate + phosphate + NAD(+) = (2R)-3-phospho-glyceroyl phosphate + NADH + H(+). It participates in carbohydrate degradation; glycolysis; pyruvate from D-glyceraldehyde 3-phosphate: step 1/5. Its function is as follows. May play an important role in regulating the switch between different pathways for energy production during spermiogenesis and in the spermatozoon. Required for sperm motility and male fertility. This is Glyceraldehyde-3-phosphate dehydrogenase, testis-specific (Gapdhs) from Mus musculus (Mouse).